A 216-amino-acid polypeptide reads, in one-letter code: Orotate phosphoribosyltransferase (216 aa).

Lysine 30 contributes to the 5-phospho-alpha-D-ribose 1-diphosphate binding site. Phenylalanine 38–phenylalanine 39 provides a ligand contact to orotate. 5-phospho-alpha-D-ribose 1-diphosphate is bound by residues tyrosine 75 to lysine 76, arginine 102, lysine 103, lysine 106, histidine 108, and aspartate 128 to alanine 136. Orotate is bound by residues threonine 132 and arginine 160.

This sequence belongs to the purine/pyrimidine phosphoribosyltransferase family. PyrE subfamily. Homodimer. The cofactor is Mg(2+).

It carries out the reaction orotidine 5'-phosphate + diphosphate = orotate + 5-phospho-alpha-D-ribose 1-diphosphate. It participates in pyrimidine metabolism; UMP biosynthesis via de novo pathway; UMP from orotate: step 1/2. In terms of biological role, catalyzes the transfer of a ribosyl phosphate group from 5-phosphoribose 1-diphosphate to orotate, leading to the formation of orotidine monophosphate (OMP). The sequence is that of Orotate phosphoribosyltransferase from Acinetobacter baumannii (strain ATCC 17978 / DSM 105126 / CIP 53.77 / LMG 1025 / NCDC KC755 / 5377).